A 151-amino-acid chain; its full sequence is 3-hydroxyacyl-[acyl-carrier-protein] dehydratase FabZ (151 aa).

The active site involves histidine 52.

It belongs to the thioester dehydratase family. FabZ subfamily.

It is found in the cytoplasm. The catalysed reaction is a (3R)-hydroxyacyl-[ACP] = a (2E)-enoyl-[ACP] + H2O. Involved in unsaturated fatty acids biosynthesis. Catalyzes the dehydration of short chain beta-hydroxyacyl-ACPs and long chain saturated and unsaturated beta-hydroxyacyl-ACPs. This chain is 3-hydroxyacyl-[acyl-carrier-protein] dehydratase FabZ (fabZ1), found in Lactococcus lactis subsp. lactis (strain IL1403) (Streptococcus lactis).